The sequence spans 332 residues: 2,3-diketo-L-gulonate reductase (332 aa).

H44 acts as the Proton donor in catalysis. Residues 168–174 (ITMVDMS), 224–225 (WK), and 304–306 (GHE) contribute to the NAD(+) site.

Belongs to the LDH2/MDH2 oxidoreductase family. DlgD subfamily. As to quaternary structure, homodimer.

It is found in the cytoplasm. It carries out the reaction 3-dehydro-L-gulonate + NAD(+) = 2,3-dioxo-L-gulonate + NADH + H(+). It catalyses the reaction 3-dehydro-L-gulonate + NADP(+) = 2,3-dioxo-L-gulonate + NADPH + H(+). Its function is as follows. Catalyzes the reduction of 2,3-diketo-L-gulonate in the presence of NADH, to form 3-keto-L-gulonate. This is 2,3-diketo-L-gulonate reductase from Haemophilus influenzae (strain ATCC 51907 / DSM 11121 / KW20 / Rd).